The primary structure comprises 1029 residues: Translation initiation factor IF-2 (1029 aa).

The disordered stretch occupies residues 73–441; the sequence is RELRSEEDDG…RQRRRERKRE (369 aa). 2 stretches are compositionally biased toward acidic residues: residues 106–121 and 148–177; these read TAEE…DEEE and AEAE…DEAE. Over residues 183-196 the composition is skewed to basic and acidic residues; the sequence is AADKDAAAIADEQK. Acidic residues-rich tracts occupy residues 213 to 234, 242 to 258, and 279 to 322; these read TGEE…DAEA, TEAE…AEDV, and APDE…DEEG. Over residues 358–372 the composition is skewed to basic and acidic residues; sequence KDKDKDKSSKKDKKD. Residues 373-386 are compositionally biased toward basic residues; sequence KSNKKSKSKGKKQK. Residues 400-411 are compositionally biased toward low complexity; sequence QTLQETLQELEQ. Residues 417 to 427 show a composition bias toward basic residues; that stretch reads RQRRRRRRRKR. The segment covering 428-441 has biased composition (basic and acidic residues); sequence HEEERQRRRERKRE. The tr-type G domain maps to 524-696; it reads PRAPVVTVMG…LLQSEIMELK (173 aa). The segment at 533–540 is G1; the sequence is GHVDHGKT. 533–540 is a GTP binding site; it reads GHVDHGKT. A G2 region spans residues 558–562; sequence GITQH. The segment at 582-585 is G3; it reads DTPG. Residues 582–586 and 636–639 contribute to the GTP site; these read DTPGH and NKMD. The segment at 636-639 is G4; that stretch reads NKMD. The segment at 672–674 is G5; sequence SAK.

The protein belongs to the TRAFAC class translation factor GTPase superfamily. Classic translation factor GTPase family. IF-2 subfamily.

The protein resides in the cytoplasm. Functionally, one of the essential components for the initiation of protein synthesis. Protects formylmethionyl-tRNA from spontaneous hydrolysis and promotes its binding to the 30S ribosomal subunits. Also involved in the hydrolysis of GTP during the formation of the 70S ribosomal complex. This chain is Translation initiation factor IF-2, found in Salinibacter ruber (strain DSM 13855 / M31).